The primary structure comprises 854 residues: Protein SEY1 homolog (854 aa).

The Cytoplasmic segment spans residues 1 to 724 (MAAFSGETAV…LRNIESGKQS (724 aa)). A GB1/RHD3-type G domain is found at 49–291 (GVNYHVVGVF…NSNFLFSNCS (243 aa)). Residue 59–66 (GGQSSGKS) participates in GTP binding. Positions 336-386 (KHAAIEEFKEVCEEYTKKIQRGDVIPQFTRALEETIERLLKNFSDQTKLYK) form a coiled coil. The helical transmembrane segment at 725 to 745 (LPPWVLPVMLLLGWNELYYLL) threads the bilayer. Topologically, residues 746–748 (TSP) are lumenal. Residues 749 to 769 (ILLIAIIVIAVLFFKTFLKSQ) traverse the membrane as a helical segment. Over 770-854 (LEVLEEKCPV…CRESRDKGED (85 aa)) the chain is Cytoplasmic. Residues 808-854 (GGGGAQFRDPTQATSVSGASAGVSSESSSAASPRRRVCRESRDKGED) are disordered. Residues 822–839 (SVSGASAGVSSESSSAAS) are compositionally biased toward low complexity. The segment covering 845–854 (CRESRDKGED) has biased composition (basic and acidic residues).

This sequence belongs to the TRAFAC class dynamin-like GTPase superfamily. GB1/RHD3 GTPase family. RHD3 subfamily.

It localises to the endoplasmic reticulum membrane. Its function is as follows. Probable GTP-binding protein that may be involved in cell development. This is Protein SEY1 homolog from Trypanosoma brucei brucei (strain 927/4 GUTat10.1).